We begin with the raw amino-acid sequence, 497 residues long: Probable gamma-aminobutyrate transaminase 2, mitochondrial (497 aa).

A mitochondrion-targeting transit peptide spans 1 to 37 (MNLIKHAAFAASFQGETDCTSHASARKFSTSGSSPLL). 153 to 154 (GS) contributes to the pyridoxal 5'-phosphate binding site. Substrate is bound at residue tyrosine 186. Position 293 (aspartate 293) interacts with pyridoxal 5'-phosphate. Residue lysine 322 coordinates substrate. At lysine 322 the chain carries N6-(pyridoxal phosphate)lysine.

The protein belongs to the class-III pyridoxal-phosphate-dependent aminotransferase family.

Its subcellular location is the mitochondrion. The catalysed reaction is 4-aminobutanoate + pyruvate = succinate semialdehyde + L-alanine. The enzyme catalyses 4-aminobutanoate + glyoxylate = succinate semialdehyde + glycine. Functionally, transaminase that degrades gamma-amino butyric acid (GABA). In Oryza sativa subsp. indica (Rice), this protein is Probable gamma-aminobutyrate transaminase 2, mitochondrial.